A 294-amino-acid polypeptide reads, in one-letter code: Protease HtpX homolog 2 (294 aa).

The next 2 membrane-spanning stretches (helical) occupy residues 15–35 (MLFT…FLSY) and 36–56 (YGTS…AQYF). H140 contributes to the Zn(2+) binding site. Residue E141 is part of the active site. H144 is a Zn(2+) binding site. The next 2 membrane-spanning stretches (helical) occupy residues 151–171 (AVLT…RYSL) and 185–205 (GGIM…FLLI). E213 is a binding site for Zn(2+).

It belongs to the peptidase M48B family. It depends on Zn(2+) as a cofactor.

It is found in the cell membrane. The protein is Protease HtpX homolog 2 of Methanosarcina mazei (strain ATCC BAA-159 / DSM 3647 / Goe1 / Go1 / JCM 11833 / OCM 88) (Methanosarcina frisia).